The primary structure comprises 570 residues: Probable metalloreductase AIM14 (570 aa).

7 helical membrane passes run 21–41 (IKYG…LALL), 70–90 (AIHL…HYSL), 101–118 (LGRL…LTLR), 142–162 (IITV…AIDD), 177–197 (FVGF…IGPM), 204–224 (LFYI…PIHS), and 230–250 (FPFL…RIVF). Residues 101-219 (LGRLSYALIP…NLVNVAFILL (119 aa)) enclose the Ferric oxidoreductase domain. An FAD-binding FR-type domain is found at 250-388 (FAKSLMILNK…GGSGISFALP (139 aa)). Positions 480–507 (ISNFNSENADSNDKTPETSHSPTKENGS) are disordered.

The protein belongs to the ferric reductase (FRE) family. AIM14 subfamily. As to quaternary structure, interacts with ribosomes.

The protein localises to the membrane. Functionally, probable cell surface metalloreductase. May be involved in iron or copper homeostasis. This Saccharomyces cerevisiae (strain JAY291) (Baker's yeast) protein is Probable metalloreductase AIM14 (AIM14).